Reading from the N-terminus, the 580-residue chain is Acyl--CoA ligase GME11374 (580 aa).

The protein belongs to the ATP-dependent AMP-binding enzyme family.

Its pathway is secondary metabolite biosynthesis. In terms of biological role, acyl--CoA ligase; part of the gene cluster that mediates the biosynthesis of dibenzodioxocinones such as pestalotiollide B, a novel class of inhibitors against cholesterol ester transfer protein (CEPT). The biosynthesis initiates from condensation of acetate and malonate units catalyzed by the non-reducing PKS pks8/GME11356. Pks8/GME11356 lacks a thioesterase (TE) domain, which is important to the cyclizing of the third ring of atrochrysone carboxylic acid, and the esterase GME11355 might play the role of TE and catalyzes the cyclization reaction of the C ring. The lactamase-like protein GME11357 (or other beta-lactamases in Pestalotiopsis microspora) probably hydrolyzes the thioester bond between the ACP of pks8/GME11356 and the intermediate to release atrochrysone carboxylic acid, which is spontaneously dehydrates to form endocrocin anthrone. Endocrocin anthrone is further converted to emodin via the endocrocin intermediate. Emodin is then oxidized by several enzymes such as the Baeyer-Villiger oxidase GME11358, the oxidoreductase GME11367, the short chain dehydrogenase/reductase GME11373, as well as by other oxidoreductases from the cluster, to modify the A and C rings and open the B ring, and finally yield monodictyphenone. The prenyltransferase GME11375 may catalyze the addition reaction between the C5 side chains and the carbon bone of dibenzodioxocinones. The remaining biochemical reactions to the final product dibenzodioxocinones should be methylation catalyzed by methyltransferase GME11366 and reduction and lactonization reaction catalyzed by a series of oxidordeuctases. The protein is Acyl--CoA ligase GME11374 of Pestalotiopsis microspora.